The primary structure comprises 455 residues: DNA repair protein RadA (455 aa).

Residues 12–29 (CSECGSYSPKWLGQCPGC) form a C4-type zinc finger. 95–102 (GEPGIGKS) is an ATP binding site. The RadA KNRFG motif motif lies at 252–256 (KNRFG). The interval 351 to 455 (DVFLSIAGGL…TIKDAVRLLQ (105 aa)) is lon-protease-like.

The protein belongs to the RecA family. RadA subfamily.

DNA-dependent ATPase involved in processing of recombination intermediates, plays a role in repairing DNA breaks. Stimulates the branch migration of RecA-mediated strand transfer reactions, allowing the 3' invading strand to extend heteroduplex DNA faster. Binds ssDNA in the presence of ADP but not other nucleotides, has ATPase activity that is stimulated by ssDNA and various branched DNA structures, but inhibited by SSB. Does not have RecA's homology-searching function. This Chlamydia muridarum (strain MoPn / Nigg) protein is DNA repair protein RadA.